We begin with the raw amino-acid sequence, 345 residues long: N-acetyl-gamma-glutamyl-phosphate reductase (345 aa).

Cys149 is a catalytic residue.

It belongs to the NAGSA dehydrogenase family. Type 1 subfamily.

It localises to the cytoplasm. It catalyses the reaction N-acetyl-L-glutamate 5-semialdehyde + phosphate + NADP(+) = N-acetyl-L-glutamyl 5-phosphate + NADPH + H(+). It participates in amino-acid biosynthesis; L-arginine biosynthesis; N(2)-acetyl-L-ornithine from L-glutamate: step 3/4. Catalyzes the NADPH-dependent reduction of N-acetyl-5-glutamyl phosphate to yield N-acetyl-L-glutamate 5-semialdehyde. In Herminiimonas arsenicoxydans, this protein is N-acetyl-gamma-glutamyl-phosphate reductase.